The sequence spans 214 residues: Ceramide-1-phosphate transfer protein (214 aa).

Positions 56, 60, 106, 110, and 150 each coordinate an N-acylsphingoid base 1-phosphate.

It belongs to the GLTP family.

The protein localises to the cytoplasm. The protein resides in the cytosol. Its subcellular location is the golgi apparatus. It is found in the trans-Golgi network membrane. It localises to the cell membrane. The protein localises to the endosome membrane. The protein resides in the nucleus outer membrane. It carries out the reaction N-(hexadecanoyl)-sphing-4-enine-1-phosphate(in) = N-(hexadecanoyl)-sphing-4-enine-1-phosphate(out). The catalysed reaction is N-(9Z-octadecenoyl)-sphing-4-enine-1-phosphate(in) = N-(9Z-octadecenoyl)-sphing-4-enine-1-phosphate(out). Its function is as follows. Mediates the intracellular transfer of ceramide-1-phosphate (C1P) between organelle membranes and the cell membrane. Required for normal structure of the Golgi stacks. Can bind phosphoceramides with a variety of aliphatic chains, but has a preference for lipids with saturated C16:0 or monounsaturated C18:1 aliphatic chains, and is inefficient with phosphoceramides containing lignoceryl (C24:0). Plays a role in the regulation of the cellular levels of ceramide-1-phosphate, and thereby contributes to the regulation of phospholipase PLA2G4A activity and the release of arachidonic acid. Has no activity with galactosylceramide, lactosylceramide, sphingomyelin, phosphatidylcholine, phosphatidic acid and ceramide. C1P transfer is stimulated by phosphatidylserine in C1P source vesicles. Regulates autophagy, inflammasome mediated IL1B and IL18 processing, and pyroptosis, but not apoptosis. This chain is Ceramide-1-phosphate transfer protein (CPTP), found in Bos taurus (Bovine).